A 128-amino-acid polypeptide reads, in one-letter code: Cytochrome c oxidase subunit 5B, mitochondrial (128 aa).

The transit peptide at 1 to 30 (MASRLLRGVGALAAQALRRTARGAAVTRSM) directs the protein to the mitochondrion. Residues Lys67 and Lys85 each carry the N6-acetyllysine modification. Positions 90, 92, 112, and 115 each coordinate Zn(2+). An N6-acetyllysine modification is found at Lys120.

The protein belongs to the cytochrome c oxidase subunit 5B family. Component of the cytochrome c oxidase (complex IV, CIV), a multisubunit enzyme composed of 14 subunits. The complex is composed of a catalytic core of 3 subunits MT-CO1, MT-CO2 and MT-CO3, encoded in the mitochondrial DNA, and 11 supernumerary subunits COX4I, COX5A, COX5B, COX6A, COX6B, COX6C, COX7A, COX7B, COX7C, COX8 and NDUFA4, which are encoded in the nuclear genome. The complex exists as a monomer or a dimer and forms supercomplexes (SCs) in the inner mitochondrial membrane with NADH-ubiquinone oxidoreductase (complex I, CI) and ubiquinol-cytochrome c oxidoreductase (cytochrome b-c1 complex, complex III, CIII), resulting in different assemblies (supercomplex SCI(1)III(2)IV(1) and megacomplex MCI(2)III(2)IV(2)).

It localises to the mitochondrion inner membrane. It participates in energy metabolism; oxidative phosphorylation. Component of the cytochrome c oxidase, the last enzyme in the mitochondrial electron transport chain which drives oxidative phosphorylation. The respiratory chain contains 3 multisubunit complexes succinate dehydrogenase (complex II, CII), ubiquinol-cytochrome c oxidoreductase (cytochrome b-c1 complex, complex III, CIII) and cytochrome c oxidase (complex IV, CIV), that cooperate to transfer electrons derived from NADH and succinate to molecular oxygen, creating an electrochemical gradient over the inner membrane that drives transmembrane transport and the ATP synthase. Cytochrome c oxidase is the component of the respiratory chain that catalyzes the reduction of oxygen to water. Electrons originating from reduced cytochrome c in the intermembrane space (IMS) are transferred via the dinuclear copper A center (CU(A)) of subunit 2 and heme A of subunit 1 to the active site in subunit 1, a binuclear center (BNC) formed by heme A3 and copper B (CU(B)). The BNC reduces molecular oxygen to 2 water molecules using 4 electrons from cytochrome c in the IMS and 4 protons from the mitochondrial matrix. The protein is Cytochrome c oxidase subunit 5B, mitochondrial (Cox5b) of Mus musculus (Mouse).